The primary structure comprises 1755 residues: Transposon Ty1-PL Gag-Pol polyprotein (1755 aa).

Polar residues-rich tracts occupy residues 1–23 (MESQ…SVTS), 48–60 (TKAN…TPAS), and 127–152 (QSQF…GNTF). 3 disordered regions span residues 1-93 (MESQ…MMTQ), 126-174 (PQSQ…PPPM), and 352-421 (GSRN…SKST). Low complexity predominate over residues 153–165 (TDSSSADSDMTST). The segment at 299–401 (NNGIHINNKV…NSKSKTARAH (103 aa)) is RNA-binding. Residues 402 to 418 (NVSTSNNSPSTDNDSIS) show a composition bias toward low complexity. Ser416 is modified (phosphoserine). Asp461 acts as the For protease activity; shared with dimeric partner in catalysis. Residues 583–640 (NVHTSESTRKYPYPFIHRMLAHANAQTIRYSLKNNTITYFNESDVDWSSAIDYQCPDC) are integrase-type zinc finger-like. An Integrase catalytic domain is found at 660–835 (NSYEPFQYLH…AGLDISTLLP (176 aa)). Residues Asp671 and Asp736 each contribute to the Mg(2+) site. Disordered regions lie at residues 956–1087 (SKAV…ETEK), 1092–1111 (RSPS…NIVP), and 1130–1187 (DLPL…DNET). Over residues 960–969 (SPTDSTPPST) the composition is skewed to low complexity. Residues 1005 to 1015 (STPQISNIEST) are compositionally biased toward polar residues. Residues 1038–1053 (ESSHASKSKDFRHSDS) show a composition bias toward basic and acidic residues. Polar residues-rich tracts occupy residues 1054–1082 (YSEN…QISD) and 1101–1111 (PENNSSHNIVP). The short motif at 1178-1212 (KKRSLEDNETEIKVSRDTWNTKNMRSLEPPRSKKR) is the Bipartite nuclear localization signal element. The 139-residue stretch at 1338–1476 (NNYYITQLDI…DILGLEIKYQ (139 aa)) folds into the Reverse transcriptase Ty1/copia-type domain. Positions 1346, 1427, 1428, 1610, 1652, and 1685 each coordinate Mg(2+). Positions 1610-1752 (DASYGNQPYY…IKTFKLLTNK (143 aa)) constitute an RNase H Ty1/copia-type domain.

The capsid protein forms a homotrimer, from which the VLPs are assembled. The protease is a homodimer, whose active site consists of two apposed aspartic acid residues. Initially, virus-like particles (VLPs) are composed of the structural unprocessed proteins Gag and Gag-Pol, and also contain the host initiator methionine tRNA (tRNA(i)-Met) which serves as a primer for minus-strand DNA synthesis, and a dimer of genomic Ty RNA. Processing of the polyproteins occurs within the particle and proceeds by an ordered pathway, called maturation. First, the protease (PR) is released by autocatalytic cleavage of the Gag-Pol polyprotein yielding capsid protein p45 and a Pol-p154 precursor protein. This cleavage is a prerequisite for subsequent processing of Pol-p154 at the remaining sites to release the mature structural and catalytic proteins. Maturation takes place prior to the RT reaction and is required to produce transposition-competent VLPs.

It localises to the cytoplasm. The protein localises to the nucleus. The catalysed reaction is DNA(n) + a 2'-deoxyribonucleoside 5'-triphosphate = DNA(n+1) + diphosphate. The enzyme catalyses Endonucleolytic cleavage to 5'-phosphomonoester.. Capsid protein (CA) is the structural component of the virus-like particle (VLP), forming the shell that encapsulates the retrotransposons dimeric RNA genome. The particles are assembled from trimer-clustered units and there are holes in the capsid shells that allow for the diffusion of macromolecules. CA also has nucleocapsid-like chaperone activity, promoting primer tRNA(i)-Met annealing to the multipartite primer-binding site (PBS), dimerization of Ty1 RNA and initiation of reverse transcription. Functionally, the aspartyl protease (PR) mediates the proteolytic cleavages of the Gag and Gag-Pol polyproteins after assembly of the VLP. In terms of biological role, reverse transcriptase/ribonuclease H (RT) is a multifunctional enzyme that catalyzes the conversion of the retro-elements RNA genome into dsDNA within the VLP. The enzyme displays a DNA polymerase activity that can copy either DNA or RNA templates, and a ribonuclease H (RNase H) activity that cleaves the RNA strand of RNA-DNA heteroduplexes during plus-strand synthesis and hydrolyzes RNA primers. The conversion leads to a linear dsDNA copy of the retrotransposon that includes long terminal repeats (LTRs) at both ends. Its function is as follows. Integrase (IN) targets the VLP to the nucleus, where a subparticle preintegration complex (PIC) containing at least integrase and the newly synthesized dsDNA copy of the retrotransposon must transit the nuclear membrane. Once in the nucleus, integrase performs the integration of the dsDNA into the host genome. The protein is Transposon Ty1-PL Gag-Pol polyprotein (TY1B-PL) of Saccharomyces cerevisiae (strain ATCC 204508 / S288c) (Baker's yeast).